The following is a 702-amino-acid chain: 1,4-alpha-glucan-branching enzyme (702 aa).

An N-acetylalanine modification is found at alanine 2. Substrate-binding positions include 62–63 and 91–93; these read NE and WAP. Tryptophan 107 contacts (1,4-alpha-D-glucosyl)n. Residue 118–121 participates in substrate binding; sequence EYGK. (1,4-alpha-D-glucosyl)n is bound at residue lysine 143. Tyrosine 173 carries the post-translational modification Phosphotyrosine. 333–336 contacts substrate; it reads EVLR. Aspartate 357 (nucleophile) is an active-site residue. Glutamate 412 functions as the Proton donor in the catalytic mechanism.

This sequence belongs to the glycosyl hydrolase 13 family. GlgB subfamily. Monomer.

It carries out the reaction Transfers a segment of a (1-&gt;4)-alpha-D-glucan chain to a primary hydroxy group in a similar glucan chain.. It functions in the pathway glycan biosynthesis; glycogen biosynthesis. In terms of biological role, glycogen-branching enzyme participates in the glycogen biosynthetic process along with glycogenin and glycogen synthase. Generates alpha-1,6-glucosidic branches from alpha-1,4-linked glucose chains, to increase solubility of the glycogen polymer. The protein is 1,4-alpha-glucan-branching enzyme (Gbe1) of Mus musculus (Mouse).